Reading from the N-terminus, the 468-residue chain is Zinc-regulated transporter 1 (468 aa).

A signal peptide spans Met-1–Thr-17. Over Glu-18–Arg-185 the chain is Extracellular. Residues Asn-57 and Asn-67 are each glycosylated (N-linked (GlcNAc...) asparagine). A helical membrane pass occupies residues Ile-186–Leu-206. At Lys-207–Tyr-217 the chain is on the cytoplasmic side. The chain crosses the membrane as a helical span at residues Ile-218 to Leu-238. The Extracellular portion of the chain corresponds to Met-239–Gly-257. A helical transmembrane segment spans residues Thr-258–Leu-278. The Cytoplasmic portion of the chain corresponds to Arg-279 to Ser-314. Residues Val-315–Val-335 form a helical membrane-spanning segment. The Extracellular portion of the chain corresponds to Thr-336–Asp-338. Residues Val-339–Leu-359 traverse the membrane as a helical segment. Topologically, residues Ser-360–Lys-374 are cytoplasmic. A helical transmembrane segment spans residues Leu-375 to Val-395. At Leu-396 to Thr-406 the chain is on the extracellular side. Residues Leu-407 to Ile-427 traverse the membrane as a helical segment. Residues Glu-428 to Thr-447 are Cytoplasmic-facing. The helical transmembrane segment at Thr-448–Ala-468 threads the bilayer.

Belongs to the ZIP transporter (TC 2.A.5) family.

It localises to the cell membrane. It catalyses the reaction Zn(2+)(in) = Zn(2+)(out). In terms of biological role, zinc transporter that acts with PRA1 in sequestration of zinc from host tissues during infection. The pH-regulated antigen 1 (PRA1) binds zinc from its environment and then reassociates with ZRT1 to acquire this essential metal. In Candida albicans (strain SC5314 / ATCC MYA-2876) (Yeast), this protein is Zinc-regulated transporter 1 (ZRT101).